We begin with the raw amino-acid sequence, 419 residues long: Methylthioribose kinase (419 aa).

Residues Asn-49 and Lys-64 each contribute to the ATP site. Position 239 (Asp-239) interacts with substrate. 256-258 (DPE) serves as a coordination point for ATP. Arg-365 lines the substrate pocket.

The protein belongs to the methylthioribose kinase family. As to quaternary structure, homodimer.

It carries out the reaction 5-(methylsulfanyl)-D-ribose + ATP = 5-(methylsulfanyl)-alpha-D-ribose 1-phosphate + ADP + H(+). The enzyme catalyses 5-deoxy-D-ribose + ATP = 5-deoxy-alpha-D-ribose 1-phosphate + ADP + H(+). It functions in the pathway amino-acid biosynthesis; L-methionine biosynthesis via salvage pathway; S-methyl-5-thio-alpha-D-ribose 1-phosphate from S-methyl-5'-thioadenosine (hydrolase route): step 2/2. Catalyzes the phosphorylation of methylthioribose into methylthioribose-1-phosphate. Also catalyzes the phosphorylation of 5-deoxyribose to 5-deoxyribose-1-phosphate. Part of a bifunctional DHAP-shunt salvage pathway for SAM by-products. The protein is Methylthioribose kinase of Escherichia coli O45:K1 (strain S88 / ExPEC).